Reading from the N-terminus, the 110-residue chain is MKLLLAIAGLFLVQTLAEDVRAHEESSFLAAVAPEEQRACIKEGEKCAGDCQCCGKWSYCSCPLFGALGCSCIIGDAMVCVRKKKECRTSDVMNTPPGGCFSSSKRRHGR.

The signal sequence occupies residues 1–17 (MKLLLAIAGLFLVQTLA). Residues 18–38 (EDVRAHEESSFLAAVAPEEQR) constitute a propeptide that is removed on maturation. 5 disulfides stabilise this stretch: Cys-40–Cys-54, Cys-47–Cys-60, Cys-51–Cys-87, Cys-53–Cys-72, and Cys-62–Cys-70.

It belongs to the neurotoxin 37 family. As to expression, expressed by the venom gland.

It is found in the secreted. The chain is U9-agatoxin-Ao1a from Agelena orientalis (Funnel-web spider).